A 130-amino-acid polypeptide reads, in one-letter code: DNA-directed RNA polymerase subunit omega (130 aa).

Positions 110–130 are disordered; the sequence is EELLKGLEGLAPPEEQPEEEE.

It belongs to the RNA polymerase subunit omega family. In terms of assembly, the RNAP catalytic core consists of 2 alpha, 1 beta, 1 beta' and 1 omega subunit. When a sigma factor is associated with the core the holoenzyme is formed, which can initiate transcription.

The enzyme catalyses RNA(n) + a ribonucleoside 5'-triphosphate = RNA(n+1) + diphosphate. Its function is as follows. Promotes RNA polymerase assembly. Latches the N- and C-terminal regions of the beta' subunit thereby facilitating its interaction with the beta and alpha subunits. This is DNA-directed RNA polymerase subunit omega from Afipia carboxidovorans (strain ATCC 49405 / DSM 1227 / KCTC 32145 / OM5) (Oligotropha carboxidovorans).